A 424-amino-acid chain; its full sequence is 3-phosphoshikimate 1-carboxyvinyltransferase (424 aa).

Residues K21, S22, and R26 each coordinate 3-phosphoshikimate. Residue K21 coordinates phosphoenolpyruvate. Phosphoenolpyruvate is bound by residues G92 and R120. 3-phosphoshikimate is bound by residues S163, S164, Q165, S191, D306, and K333. Q165 contributes to the phosphoenolpyruvate binding site. The Proton acceptor role is filled by D306. 3 residues coordinate phosphoenolpyruvate: R337, R379, and K405.

Belongs to the EPSP synthase family. Monomer.

Its subcellular location is the cytoplasm. The enzyme catalyses 3-phosphoshikimate + phosphoenolpyruvate = 5-O-(1-carboxyvinyl)-3-phosphoshikimate + phosphate. Its pathway is metabolic intermediate biosynthesis; chorismate biosynthesis; chorismate from D-erythrose 4-phosphate and phosphoenolpyruvate: step 6/7. Catalyzes the transfer of the enolpyruvyl moiety of phosphoenolpyruvate (PEP) to the 5-hydroxyl of shikimate-3-phosphate (S3P) to produce enolpyruvyl shikimate-3-phosphate and inorganic phosphate. The protein is 3-phosphoshikimate 1-carboxyvinyltransferase of Clostridium perfringens (strain SM101 / Type A).